The following is a 797-amino-acid chain: MAP/microtubule affinity-regulating kinase 3 (797 aa).

The tract at residues Met-1–Ser-35 is disordered. Residues Asn-11–Val-28 are compositionally biased toward basic and acidic residues. Residue Ser-42 is modified to Phosphoserine. The Protein kinase domain occupies Tyr-56–Ile-307. ATP contacts are provided by residues Ile-62–Val-70 and Lys-85. Catalysis depends on Asp-178, which acts as the Proton acceptor. Thr-211 is subject to Phosphothreonine; by LKB1. In terms of domain architecture, UBA spans Ile-326–Gly-365. Phosphoserine is present on residues Ser-368, Ser-374, Ser-376, Ser-380, Ser-383, Ser-400, Ser-419, and Ser-469. Disordered stretches follow at residues Asp-372–Arg-504 and Pro-585–Ser-701. Residues Ser-374 to Ala-385 are compositionally biased toward low complexity. Positions Ser-391–Ser-400 are enriched in polar residues. Composition is skewed to polar residues over residues Val-492–Arg-504 and Pro-585–Thr-602. Residues Ser-593 and Ser-596 each carry the phosphoserine modification. Thr-602 carries the post-translational modification Phosphothreonine. Phosphothreonine; by PKC/PRKCZ is present on Thr-617. Phosphoserine occurs at positions 636, 651, and 654. Residues Pro-637–Lys-664 show a composition bias toward polar residues. A compositionally biased stretch (basic and acidic residues) spans Leu-669–Arg-678. The residue at position 687 (Ser-687) is a Phosphoserine. Positions Glu-689–Pro-699 are enriched in basic and acidic residues. Positions Asp-748 to Leu-797 constitute a KA1 domain.

This sequence belongs to the protein kinase superfamily. CAMK Ser/Thr protein kinase family. SNF1 subfamily. As to quaternary structure, interacts with MAPT/TAU. Interacts with DLG5 (via coiled-coil domain). Interacts with STK3/MST2 and STK4/MST1 in the presence of DLG5. Interacts with YWHAB, YWHAG, YWHAQ and YWHAZ. Interacts with PKP2 (via N-terminus). Interacts with CDC25C. Interacts with KSR1. Post-translationally, phosphorylated at Thr-211 by STK11/LKB1 in complex with STE20-related adapter-alpha (STRADA) pseudo kinase and CAB39. Phosphorylation at Thr-617 by PRKCZ/aPKC inhibits the kinase activity.

The protein localises to the cell membrane. It is found in the cell projection. It localises to the dendrite. The protein resides in the cytoplasm. The enzyme catalyses L-seryl-[protein] + ATP = O-phospho-L-seryl-[protein] + ADP + H(+). The catalysed reaction is L-threonyl-[protein] + ATP = O-phospho-L-threonyl-[protein] + ADP + H(+). Activated by phosphorylation on Thr-211. Inhibited by phosphorylation on Thr-617. Functionally, serine/threonine-protein kinase. Involved in the specific phosphorylation of microtubule-associated proteins for MAP2 and MAP4. Phosphorylates the microtubule-associated protein MAPT/TAU. Phosphorylates CDC25C on 'Ser-216'. Regulates localization and activity of some histone deacetylases by mediating phosphorylation of HDAC7, promoting subsequent interaction between HDAC7 and 14-3-3 and export from the nucleus. Regulates localization and activity of MITF by mediating its phosphorylation, promoting subsequent interaction between MITF and 14-3-3 and retention in the cytosol. Negatively regulates the Hippo signaling pathway and antagonizes the phosphorylation of LATS1. Cooperates with DLG5 to inhibit the kinase activity of STK3/MST2 toward LATS1. Phosphorylates PKP2 and KSR1. The sequence is that of MAP/microtubule affinity-regulating kinase 3 (Mark3) from Rattus norvegicus (Rat).